Consider the following 509-residue polypeptide: Probable DNA ligase (509 aa).

Asp218 is an ATP binding site. Residue Lys220 is the N6-AMP-lysine intermediate of the active site. ATP is bound by residues Arg225, Arg240, Glu269, Phe302, Arg374, and Lys380.

It belongs to the ATP-dependent DNA ligase family. Requires Mg(2+) as cofactor.

It catalyses the reaction ATP + (deoxyribonucleotide)n-3'-hydroxyl + 5'-phospho-(deoxyribonucleotide)m = (deoxyribonucleotide)n+m + AMP + diphosphate.. Functionally, DNA ligase that seals nicks in double-stranded DNA during DNA replication, DNA recombination and DNA repair. The polypeptide is Probable DNA ligase (Nocardioides sp. (strain ATCC BAA-499 / JS614)).